A 489-amino-acid polypeptide reads, in one-letter code: Cysteine--tRNA ligase (489 aa).

Cys29 contacts Zn(2+). Positions 31-41 (ITSYDYCHIGH) match the 'HIGH' region motif. Zn(2+)-binding residues include Cys209, His234, and Glu238. Positions 266–270 (KMSKS) match the 'KMSKS' region motif. Lys269 serves as a coordination point for ATP.

The protein belongs to the class-I aminoacyl-tRNA synthetase family. Monomer. The cofactor is Zn(2+).

Its subcellular location is the cytoplasm. It catalyses the reaction tRNA(Cys) + L-cysteine + ATP = L-cysteinyl-tRNA(Cys) + AMP + diphosphate. The chain is Cysteine--tRNA ligase from Desulfotalea psychrophila (strain LSv54 / DSM 12343).